A 703-amino-acid polypeptide reads, in one-letter code: Phosphoribosylformylglycinamidine synthase subunit PurL (703 aa).

Residue histidine 36 is part of the active site. ATP-binding residues include tyrosine 39 and lysine 80. Glutamate 82 contributes to the Mg(2+) binding site. Substrate contacts are provided by residues 83-86 (SHNH) and arginine 105. The active-site Proton acceptor is histidine 84. Aspartate 106 is a Mg(2+) binding site. Residue glutamine 226 coordinates substrate. Residue aspartate 252 participates in Mg(2+) binding. 294–296 (ETQ) is a substrate binding site. Aspartate 468 and glycine 505 together coordinate ATP. Position 508 (serine 508) interacts with substrate.

The protein belongs to the FGAMS family. Monomer. Part of the FGAM synthase complex composed of 1 PurL, 1 PurQ and 2 PurS subunits.

The protein localises to the cytoplasm. The enzyme catalyses N(2)-formyl-N(1)-(5-phospho-beta-D-ribosyl)glycinamide + L-glutamine + ATP + H2O = 2-formamido-N(1)-(5-O-phospho-beta-D-ribosyl)acetamidine + L-glutamate + ADP + phosphate + H(+). It functions in the pathway purine metabolism; IMP biosynthesis via de novo pathway; 5-amino-1-(5-phospho-D-ribosyl)imidazole from N(2)-formyl-N(1)-(5-phospho-D-ribosyl)glycinamide: step 1/2. In terms of biological role, part of the phosphoribosylformylglycinamidine synthase complex involved in the purines biosynthetic pathway. Catalyzes the ATP-dependent conversion of formylglycinamide ribonucleotide (FGAR) and glutamine to yield formylglycinamidine ribonucleotide (FGAM) and glutamate. The FGAM synthase complex is composed of three subunits. PurQ produces an ammonia molecule by converting glutamine to glutamate. PurL transfers the ammonia molecule to FGAR to form FGAM in an ATP-dependent manner. PurS interacts with PurQ and PurL and is thought to assist in the transfer of the ammonia molecule from PurQ to PurL. This is Phosphoribosylformylglycinamidine synthase subunit PurL from Sulfurisphaera tokodaii (strain DSM 16993 / JCM 10545 / NBRC 100140 / 7) (Sulfolobus tokodaii).